The following is a 655-amino-acid chain: Epithelial sodium channel subunit alpha (655 aa).

The Cytoplasmic segment spans residues 1–55 (MTDKEEEAEGGKKKEPMIGFYDSYQELFEFFCNNTTIHGTIRMVCSKHNNMKTVS). Residues 56 to 76 (WTILFITTFGVMYWQFGLLLG) traverse the membrane as a helical segment. The Extracellular portion of the chain corresponds to 77–531 (QYYSYPVSIT…SQWSLWFGSS (455 aa)). 10 cysteine pairs are disulfide-bonded: C102–C275, C199–C206, C252–C259, C364–C448, C385–C425, C385–C444, C389–C440, C398–C425, C398–C448, and C400–C414. Residues 532–552 (VLSVVEMGELVFDLIAVGVIV) traverse the membrane as a helical segment. Topologically, residues 553–655 (LRRRRREKCQ…QEASEGPTVL (103 aa)) are cytoplasmic. The interval 561 to 587 (CQASSDGEGTSDSTAGTHRGQENASRS) is disordered. Residues 562–586 (QASSDGEGTSDSTAGTHRGQENASR) show a composition bias toward polar residues.

It belongs to the amiloride-sensitive sodium channel (TC 1.A.6) family. SCNN1A subfamily. Heterotrimer; containing an alpha/SCNN1A, a beta/SCNN1B and a gamma/SCNN1G subunit. In terms of tissue distribution, strongly expressed in gill, kidney and rectum (at protein level). More weakly expressed in muscle, brain, heart, liver and intestine.

Its subcellular location is the apical cell membrane. The protein resides in the cell projection. The protein localises to the cilium. It localises to the cytoplasmic granule. It is found in the cytoplasm. Its subcellular location is the cytoplasmic vesicle. The protein resides in the secretory vesicle. The protein localises to the acrosome. It localises to the flagellum. The catalysed reaction is Na(+)(in) = Na(+)(out). With respect to regulation, originally identified and characterized by its inhibition by the diuretic drug amiloride. This is one of the three pore-forming subunits of the heterotrimeric epithelial sodium channel (ENaC), a critical regulator of sodium balance and fluid homeostasis. ENaC operates in epithelial tissues, where it mediates the electrodiffusion of sodium ions from extracellular fluid through the apical membrane of cells, with water following osmotically. The polypeptide is Epithelial sodium channel subunit alpha (scnn1a) (Neoceratodus forsteri (Australian lungfish)).